A 279-amino-acid polypeptide reads, in one-letter code: Protein BASIC PENTACYSTEINE2 (279 aa).

Residues 126-167 (TKKRKTNAKAGSTPKAKKPRKPKDENSNNNNNNNTNVTRVKP) are disordered. Low complexity predominate over residues 152-161 (SNNNNNNNTN).

It belongs to the BBR/BPC family. Expressed in seedlings, leaves and pistils. Detected in the base of flowers and tips of carpels, in sepal and petal vasculature, in pollen grains, in young rosette, in the lateral and tip of primary roots, and in ovule at the exception of the outer integument.

It localises to the nucleus. In terms of biological role, transcriptional regulator that specifically binds to GA-rich elements (GAGA-repeats) present in regulatory sequences of genes involved in developmental processes. This Arabidopsis thaliana (Mouse-ear cress) protein is Protein BASIC PENTACYSTEINE2.